Here is a 295-residue protein sequence, read N- to C-terminus: MSLKHFIQITKPGIIFGNVLSVAGGFFLASKGNIDFGVFLAAVIGTSLVVASGCVFNNCIDRDIDQRMERTRNRVLVQGLVSLKLALLYATLLGIAGVALLYTEANPLAALFAVIGFVIYVGFYSLYLKRRSVHGTLVGSLSGAMPPVIGYCAVSNSFDFAALTLLVMFSLWQMPHSYAIAIFRFNDYRAAKIPVLPVQRGILVTKRHILLYILAFLVATLMLTVGGYAGLNYLAVAAGMGMYWLYMAWKGYKAVDDTVWARKLFVFSIFTITALSVMMSVDFQVTKELLVTYAF.

Transmembrane regions (helical) follow at residues 9-29 (ITKP…FFLA), 36-56 (FGVF…GCVF), 80-100 (LVSL…GVAL), 108-128 (LAAL…SLYL), 135-155 (GTLV…CAVS), 163-183 (LTLL…IAIF), 209-229 (ILLY…GGYA), 230-250 (GLNY…MAWK), and 265-285 (FVFS…DFQV).

The protein belongs to the UbiA prenyltransferase family. Protoheme IX farnesyltransferase subfamily.

The protein localises to the cell inner membrane. It catalyses the reaction heme b + (2E,6E)-farnesyl diphosphate + H2O = Fe(II)-heme o + diphosphate. It participates in porphyrin-containing compound metabolism; heme O biosynthesis; heme O from protoheme: step 1/1. Functionally, converts heme B (protoheme IX) to heme O by substitution of the vinyl group on carbon 2 of heme B porphyrin ring with a hydroxyethyl farnesyl side group. This is Protoheme IX farnesyltransferase from Pseudomonas syringae pv. tomato (strain ATCC BAA-871 / DC3000).